The primary structure comprises 309 residues: ADP-L-glycero-D-manno-heptose-6-epimerase (309 aa).

NADP(+) is bound by residues L10–I11, D31–N32, K38, K53, Q75–S79, and N92. Y139 (proton acceptor) is an active-site residue. K143 provides a ligand contact to NADP(+). N168 contributes to the substrate binding site. 2 residues coordinate NADP(+): V169 and K177. K177 acts as the Proton acceptor in catalysis. Residues S179, H186, F200 to S203, R208, and Y271 each bind substrate.

The protein belongs to the NAD(P)-dependent epimerase/dehydratase family. HldD subfamily. Homopentamer. It depends on NADP(+) as a cofactor.

It catalyses the reaction ADP-D-glycero-beta-D-manno-heptose = ADP-L-glycero-beta-D-manno-heptose. It functions in the pathway nucleotide-sugar biosynthesis; ADP-L-glycero-beta-D-manno-heptose biosynthesis; ADP-L-glycero-beta-D-manno-heptose from D-glycero-beta-D-manno-heptose 7-phosphate: step 4/4. In terms of biological role, catalyzes the interconversion between ADP-D-glycero-beta-D-manno-heptose and ADP-L-glycero-beta-D-manno-heptose via an epimerization at carbon 6 of the heptose. This is ADP-L-glycero-D-manno-heptose-6-epimerase from Histophilus somni (strain 2336) (Haemophilus somnus).